The primary structure comprises 61 residues: MPTTRQCSFCGHEIPPGTGLMYVRNDGTILWFCSSKCRKSMLKYHRDPKKYKWTTRYMKVR.

4 residues coordinate Zn(2+): Cys7, Cys10, Cys33, and Cys37. The C4-type zinc finger occupies Cys7 to Cys37.

Belongs to the eukaryotic ribosomal protein eL24 family. As to quaternary structure, part of the 50S ribosomal subunit. Forms a cluster with proteins L3 and L14. The cofactor is Zn(2+).

Binds to the 23S rRNA. The chain is Large ribosomal subunit protein eL24 from Saccharolobus islandicus (strain Y.N.15.51 / Yellowstone #2) (Sulfolobus islandicus).